Consider the following 357-residue polypeptide: Peptide chain release factor 1 (357 aa).

Gln236 is modified (N5-methylglutamine). Residues 284 to 293 (RRKKDQERAN) are compositionally biased toward basic and acidic residues. Positions 284–313 (RRKKDQERANNRRKQIGSGDRSERIRTYNF) are disordered.

It belongs to the prokaryotic/mitochondrial release factor family. Methylated by PrmC. Methylation increases the termination efficiency of RF1.

The protein resides in the cytoplasm. Functionally, peptide chain release factor 1 directs the termination of translation in response to the peptide chain termination codons UAG and UAA. This is Peptide chain release factor 1 from Rickettsia bellii (strain RML369-C).